The primary structure comprises 383 residues: MTAPAELSPTLQLACDLIRRPSVTPVDADCQAQMMNRLGAVGFQLEPMRIEDVDNFWATHGSQDGPVLCFAGHTDVVPTGPVQQWQHEPFEALIDADGMLCGRGAADMKGSLASMVIASERFVQDYPNHRGKVAFLITSDEEGPAHHGTKAVVERLKARNERLDWCIVGEPSSTTLLGDVVKNGRRGSLGAKLTIRGKQGHVAYPHLARNPIHLAAPALAELAAEHWDEGNAFFPPTSFQISNLNSGTGATNVVPGELTALFNFRFSTESTVEGLQARVSAILDKHELDWSVDWALSGLPFLTEPGELLDAVAASIKGVTGRDTQPSTSGGTSDGRFIATMGTQVVELGPVNATIHQVDERILASDLDLLTEIYYQTLVRLLA.

His-73 lines the Zn(2+) pocket. The active site involves Asp-75. Asp-107 is a Zn(2+) binding site. Catalysis depends on Glu-141, which acts as the Proton acceptor. Zn(2+) is bound by residues Glu-142, Glu-170, and His-356.

Belongs to the peptidase M20A family. DapE subfamily. In terms of assembly, homodimer. Zn(2+) is required as a cofactor. Co(2+) serves as cofactor.

It catalyses the reaction N-succinyl-(2S,6S)-2,6-diaminopimelate + H2O = (2S,6S)-2,6-diaminopimelate + succinate. Its pathway is amino-acid biosynthesis; L-lysine biosynthesis via DAP pathway; LL-2,6-diaminopimelate from (S)-tetrahydrodipicolinate (succinylase route): step 3/3. Functionally, catalyzes the hydrolysis of N-succinyl-L,L-diaminopimelic acid (SDAP), forming succinate and LL-2,6-diaminopimelate (DAP), an intermediate involved in the bacterial biosynthesis of lysine and meso-diaminopimelic acid, an essential component of bacterial cell walls. In Pseudomonas putida (strain ATCC 700007 / DSM 6899 / JCM 31910 / BCRC 17059 / LMG 24140 / F1), this protein is Succinyl-diaminopimelate desuccinylase.